We begin with the raw amino-acid sequence, 410 residues long: Peptidase T (410 aa).

Position 79 (H79) interacts with Zn(2+). The active site involves D81. Residue D142 participates in Zn(2+) binding. E176 acts as the Proton acceptor in catalysis. Zn(2+)-binding residues include E177, D199, and H381.

It belongs to the peptidase M20B family. Zn(2+) serves as cofactor.

The protein localises to the cytoplasm. The catalysed reaction is Release of the N-terminal residue from a tripeptide.. Cleaves the N-terminal amino acid of tripeptides. The chain is Peptidase T from Listeria monocytogenes serotype 4b (strain CLIP80459).